The following is a 152-amino-acid chain: Ribosome maturation factor RimP (152 aa).

Belongs to the RimP family.

It is found in the cytoplasm. Functionally, required for maturation of 30S ribosomal subunits. The polypeptide is Ribosome maturation factor RimP (Burkholderia ambifaria (strain MC40-6)).